The following is a 349-amino-acid chain: Anthranilate phosphoribosyltransferase (349 aa).

Residues glycine 82, glycine 85–aspartate 86, asparagine 92–threonine 95, lysine 110–glycine 118, and serine 122 each bind 5-phospho-alpha-D-ribose 1-diphosphate. Glycine 82 contacts anthranilate. Serine 94 lines the Mg(2+) pocket. Asparagine 113 provides a ligand contact to anthranilate. Arginine 168 contacts anthranilate. The Mg(2+) site is built by aspartate 227 and glutamate 228.

The protein belongs to the anthranilate phosphoribosyltransferase family. As to quaternary structure, homodimer. Mg(2+) is required as a cofactor.

It carries out the reaction N-(5-phospho-beta-D-ribosyl)anthranilate + diphosphate = 5-phospho-alpha-D-ribose 1-diphosphate + anthranilate. It functions in the pathway amino-acid biosynthesis; L-tryptophan biosynthesis; L-tryptophan from chorismate: step 2/5. Catalyzes the transfer of the phosphoribosyl group of 5-phosphorylribose-1-pyrophosphate (PRPP) to anthranilate to yield N-(5'-phosphoribosyl)-anthranilate (PRA). The polypeptide is Anthranilate phosphoribosyltransferase (Pseudomonas fluorescens (strain Pf0-1)).